A 99-amino-acid polypeptide reads, in one-letter code: Elongin-C (99 aa).

Serine 2 carries the N-acetylserine modification. Serine 2 carries the phosphoserine modification.

Belongs to the SKP1 family. As to quaternary structure, heterodimer with ELA1. Component of a CRL3 E3 ubiquitin ligase complex consisting of the cullin CUL3, the linker protein ELC1, the substrate receptor ELA1, and the RING protein HRT1. Interacts with CIN5. Interacts with PCL6. Interacts with SNF4. Interacts with the large RNA polymerase II subunit RPO21 in a manner dependent on DEF1. Interacts with DEF1. Interacts with RAD7. Interacts with RAD16.

Its subcellular location is the cytoplasm. It localises to the nucleus. Its function is as follows. As part of the CRL3 E3 ubiquitin ligase complex; polyubiquitylates monoubiquitylated RNA polymerase II subunit RPO21 to trigger its proteolysis; plays a role in global genomic repair. Prevents degradation of interacting proteins like PCL6 by the proteasome. This Saccharomyces cerevisiae (strain ATCC 204508 / S288c) (Baker's yeast) protein is Elongin-C (ELC1).